Consider the following 433-residue polypeptide: Protein translocase subunit SecD (433 aa).

Helical transmembrane passes span 7 to 27, 257 to 277, 278 to 298, 300 to 320, 354 to 374, and 380 to 400; these read LAFL…GPKI, LIAG…AYRM, AGLI…LTFA, LHVV…GIAV, TIVD…IFGG, and GFAV…VLFA.

Belongs to the SecD/SecF family. SecD subfamily. Forms a complex with SecF. Part of the essential Sec protein translocation apparatus which comprises SecA, SecYEG and auxiliary proteins SecDF. Other proteins may also be involved.

Its subcellular location is the cell membrane. In terms of biological role, part of the Sec protein translocase complex. Interacts with the SecYEG preprotein conducting channel. SecDF uses the proton motive force (PMF) to complete protein translocation after the ATP-dependent function of SecA. The chain is Protein translocase subunit SecD from Alicyclobacillus acidocaldarius subsp. acidocaldarius (strain ATCC 27009 / DSM 446 / BCRC 14685 / JCM 5260 / KCTC 1825 / NBRC 15652 / NCIMB 11725 / NRRL B-14509 / 104-IA) (Bacillus acidocaldarius).